A 393-amino-acid polypeptide reads, in one-letter code: S-adenosylmethionine synthase 2 (393 aa).

Mg(2+) is bound at residue E9. H15 is a binding site for ATP. E43 provides a ligand contact to K(+). L-methionine-binding residues include E56 and Q99. Residues 167 to 169, 235 to 238, D246, 252 to 253, A269, K273, and K277 contribute to the ATP site; these read DGK, SGRF, and RK. An L-methionine-binding site is contributed by D246. K277 provides a ligand contact to L-methionine.

This sequence belongs to the AdoMet synthase family. Homotetramer. Interacts with GRF3. It depends on Mn(2+) as a cofactor. Mg(2+) serves as cofactor. The cofactor is Co(2+). K(+) is required as a cofactor. As to expression, highly expressed in stems and roots. Detected in trichomes (at the protein level).

It localises to the cytoplasm. It carries out the reaction L-methionine + ATP + H2O = S-adenosyl-L-methionine + phosphate + diphosphate. It participates in amino-acid biosynthesis; S-adenosyl-L-methionine biosynthesis; S-adenosyl-L-methionine from L-methionine: step 1/1. Inhibited by 5,5'-dithiobis-2-nitrobenzoic acid (DTNB) and N-ethylmaleimide (NEM) (in vitro). Functionally, catalyzes the formation of S-adenosylmethionine from methionine and ATP. The reaction comprises two steps that are both catalyzed by the same enzyme: formation of S-adenosylmethionine (AdoMet) and triphosphate, and subsequent hydrolysis of the triphosphate. The polypeptide is S-adenosylmethionine synthase 2 (SAM2) (Arabidopsis thaliana (Mouse-ear cress)).